Here is a 204-residue protein sequence, read N- to C-terminus: MKLFFDLFPIILFFAAYQLYDQLPPDIVAGLDRIPFLVLIPGAPENAILFATAIAILASVLQVGLYFFKHHRFESMHLVTLGLVVVLGGATLMFRDPTFIKWKPTVVNWLFGLAFLASQLFTRKPLVQRMMSTAITLPTSIWNRLNGAWIIFFLVSGLANLYVAYAFTEAVWVNFKLFGMLGLTLLFVVGQAFYLTRYLNPSED.

Transmembrane regions (helical) follow at residues I48 to F68, F73 to M93, W102 to T122, G147 to F167, and A170 to G190.

The protein belongs to the YciB family.

The protein localises to the cell inner membrane. In terms of biological role, plays a role in cell envelope biogenesis, maintenance of cell envelope integrity and membrane homeostasis. The sequence is that of Inner membrane-spanning protein YciB from Nitrosococcus oceani (strain ATCC 19707 / BCRC 17464 / JCM 30415 / NCIMB 11848 / C-107).